The following is a 186-amino-acid chain: ADP-ribosylation factor-like protein 8B (186 aa).

N-acetylmethionine is present on methionine 1. Positions 1–19 (MLALISRLLDWFRSLFWKE) form an intramembrane region, note=Mediates targeting to membranes. Residues 29 to 35 (QYSGKTT), 71 to 75 (DIGGQ), and 130 to 133 (NKRD) contribute to the GTP site. Lysine 141 is covalently cross-linked (Glycyl lysine isopeptide (Lys-Gly) (interchain with G-Cter in ubiquitin)).

This sequence belongs to the small GTPase superfamily. Arf family. As to quaternary structure, interacts with tubulin. Interacts with BORCS5; recruits ARL8B to lysosomes. Interacts with VPS41; the interaction mediates the recruitment of the HOPS complex to lysosomes. Interacts (GTP-bound form) with PLEKHM2 (via RUN domain); the interaction is required to recruit the motor protein kinesin-1 on lysosomes. Interacts (GTP-bound form) with PLEKHM1 (via RUN domain); the interaction is required for PLEKHM1 localization to lysosomes and for ARL8B function in delivery and degradation of endocytic and autophagic cargo in lysosomes. PLEKHM1 and PLEKHM2 compete for interaction with ARL8B. Interacts (GTP-bound form) with RUFY1; the interaction is required for RUFY1 endosomal location. When GTP-bound, interacts with RUFY3 and RUFY4, but not with RUFY1, nor RUFY2. Ubiquitinated at Lys-141 by RNF167, leading to its degradation. In terms of tissue distribution, ubiquitously expressed.

It localises to the late endosome membrane. The protein localises to the lysosome membrane. The protein resides in the cytoplasm. It is found in the cytoskeleton. Its subcellular location is the spindle. It localises to the cell projection. The protein localises to the axon. The protein resides in the synapse. It is found in the cytolytic granule membrane. Its subcellular location is the early endosome membrane. It carries out the reaction GTP + H2O = GDP + phosphate + H(+). Small GTPase which cycles between active GTP-bound and inactive GDP-bound states. In its active state, binds to a variety of effector proteins playing a key role in the regulation of lysosomal positioning which is important for nutrient sensing, natural killer cell-mediated cytotoxicity and antigen presentation. Along with its effectors, orchestrates lysosomal transport and fusion. Localizes specifically to lysosomal membranes and mediates anterograde lysosomal motility by recruiting PLEKHM2, which in turn recruits the motor protein kinesin-1 on lysosomes. Required for lysosomal and cytolytic granule exocytosis. Critical factor involved in NK cell-mediated cytotoxicity. Drives the polarization of cytolytic granules and microtubule-organizing centers (MTOCs) toward the immune synapse between effector NK lymphocytes and target cells. In neurons, mediates the anterograde axonal long-range transport of presynaptic lysosome-related vesicles required for presynaptic biogenesis and synaptic function. Also acts as a regulator of endosome to lysosome trafficking pathways of special significance for host defense. Recruits RUFY1 onto early endosomes regulating endosomes to trans-Golgi network proteins retrieval. Regulates cargo trafficking to lysosomes by binding to PLEKHM1 and recruiting the HOPS subunit VPS41, resulting in functional assembly of the HOPS complex on lysosomal membranes. Plays an important role in cargo delivery to lysosomes for antigen presentation and microbial killing. Directs the intersection of CD1d with lipid antigens in lysosomes, and plays a role in intersecting phagosomes with lysosomes to generate phagolysosomes that kill microbes. Involved in the process of MHC II presentation. Regulates the delivery of antigens to lysosomes and the formation of MHC II-peptide complexes through the recruitment of the HOPS complex to lysosomes allowing the fusion of late endosomes to lysosomes. May play a role in chromosome segregation. In terms of biological role, (Microbial infection) During Mycobacterium tuberculosis (Mtb) infection, is required for plasma membrane repair by controlling the exocytosis of lysosomes in macrophages. ARL8B secretion pathway is crucial to control the type of cell death of the M.tuberculosis-infected macrophages, distinguishing avirulent from virulent Mtb induced necrotic cell death. Its function is as follows. (Microbial infection) During infection, coronaviruses such as SARS-CoV-2 and the chaperone HSPA5/GRP78 are probably co-released through ARL8B-dependent lysosomal exocytic pathway for unconventional egress. This is ADP-ribosylation factor-like protein 8B from Homo sapiens (Human).